Consider the following 364-residue polypeptide: 4-hydroxythreonine-4-phosphate dehydrogenase (364 aa).

Residues histidine 148 and threonine 149 each coordinate substrate. Histidine 177, histidine 216, and histidine 301 together coordinate a divalent metal cation. 3 residues coordinate substrate: lysine 309, asparagine 318, and arginine 327.

It belongs to the PdxA family. In terms of assembly, homodimer. Zn(2+) is required as a cofactor. The cofactor is Mg(2+). It depends on Co(2+) as a cofactor.

It is found in the cytoplasm. The enzyme catalyses 4-(phosphooxy)-L-threonine + NAD(+) = 3-amino-2-oxopropyl phosphate + CO2 + NADH. The protein operates within cofactor biosynthesis; pyridoxine 5'-phosphate biosynthesis; pyridoxine 5'-phosphate from D-erythrose 4-phosphate: step 4/5. Its function is as follows. Catalyzes the NAD(P)-dependent oxidation of 4-(phosphooxy)-L-threonine (HTP) into 2-amino-3-oxo-4-(phosphooxy)butyric acid which spontaneously decarboxylates to form 3-amino-2-oxopropyl phosphate (AHAP). The polypeptide is 4-hydroxythreonine-4-phosphate dehydrogenase (Campylobacter jejuni subsp. jejuni serotype O:23/36 (strain 81-176)).